We begin with the raw amino-acid sequence, 825 residues long: NT-3 growth factor receptor (825 aa).

The signal sequence occupies residues 1 to 31 (MDVSLCPAKCSFWRIFLLGSVWLDYVGSVLA). Cystine bridges form between Cys-32/Cys-38 and Cys-36/Cys-45. At 32–429 (CPANCVCSKT…TVTHKPEEDT (398 aa)) the chain is on the extracellular side. N-linked (GlcNAc...) asparagine glycosylation is found at Asn-68, Asn-72, and Asn-79. LRR repeat units follow at residues 104–125 (GLQKLTIKNSGLRSIQPRAFAK) and 128–149 (HLRYINLSSNRLTTLSWQLFQT). Asn-133 and Asn-163 each carry an N-linked (GlcNAc...) asparagine glycan. The LRRCT domain occupies 160 to 209 (NFFNCSCDIRWMQLWQEQGEARLNSQNLYCINADGSQLPLFRMNISQCDL). 2 cysteine pairs are disulfide-bonded: Cys-164–Cys-189 and Cys-166–Cys-207. 7 N-linked (GlcNAc...) asparagine glycosylation sites follow: Asn-203, Asn-218, Asn-232, Asn-259, Asn-267, Asn-272, and Asn-294. Ig-like C2-type domains lie at 210–300 (PEIS…VALT) and 309–382 (SLEE…IAKN). Cys-231 and Cys-284 are oxidised to a cystine. Cysteines 320 and 362 form a disulfide. Asn-375 and Asn-388 each carry an N-linked (GlcNAc...) asparagine glycan. A helical transmembrane segment spans residues 430–453 (FGVSIAVGLAAFACVLLVVLFIMI). Residues 454–825 (NKYGRRSKFG…ATPIYLDILG (372 aa)) are Cytoplasmic-facing. The residue at position 493 (Ser-493) is a Phosphoserine. Tyr-516 is subject to Phosphotyrosine; by autocatalysis. The region spanning 538 to 825 (IVLKRELGEG…ATPIYLDILG (288 aa)) is the Protein kinase domain. Residues 544–552 (LGEGAFGKV) and Lys-572 contribute to the ATP site. The active-site Proton acceptor is the Asp-679. Phosphotyrosine; by autocatalysis occurs at positions 705, 709, and 710.

This sequence belongs to the protein kinase superfamily. Tyr protein kinase family. Insulin receptor subfamily. As to quaternary structure, exists in a dynamic equilibrium between monomeric (low affinity) and dimeric (high affinity) structures. Binds SH2B2. Interacts with SQSTM1 and KIDINS220. Interacts with PTPRS. Interacts with MAPK8IP3/JIP3. In terms of processing, ligand-mediated auto-phosphorylation.

The protein resides in the membrane. The enzyme catalyses L-tyrosyl-[protein] + ATP = O-phospho-L-tyrosyl-[protein] + ADP + H(+). Functionally, receptor tyrosine kinase involved in nervous system and probably heart development. Upon binding of its ligand NTF3/neurotrophin-3, NTRK3 autophosphorylates and activates different signaling pathways, including the phosphatidylinositol 3-kinase/AKT and the MAPK pathways, that control cell survival and differentiation. In Saimiri boliviensis boliviensis (Bolivian squirrel monkey), this protein is NT-3 growth factor receptor (NTRK3).